The chain runs to 597 residues: Intrastrand cross-link recognition protein (597 aa).

Polar residues predominate over residues 1 to 28 (MNTGISPKQDDASNSNLLNIGQDHSLQY). 4 disordered regions span residues 1-134 (MNTG…NVNA), 174-212 (QTNP…LAAS), 259-291 (SAGN…QQQM), and 327-364 (HLQQ…PKRP). Basic and acidic residues predominate over residues 32–42 (EHNDSQYRDAS). Composition is skewed to low complexity over residues 52 to 134 (QFQA…NVNA), 178 to 212 (SVTG…LAAS), 260 to 271 (AGNAAGNANTAT), 281 to 291 (QPQLTHHQQQM), and 327 to 337 (HLQQQQQQQQH). A compositionally biased stretch (basic residues) spans 351 to 361 (ERRKQLKKQGP). 2 DNA-binding regions (HMG box) span residues 361-429 (PKRP…DAYE) and 434-502 (PKRP…PDEN). Ser532 bears the Phosphoserine mark. Low complexity-rich tracts occupy residues 543–556 (SVTG…NPNT) and 564–580 (LQQQ…QQQQ). A disordered region spans residues 543–597 (SVTGSNSNSTNPNTPVSPPISLQQQPLQQQQQQQQQQQHMLLADPTTNGSIIKNE). The segment covering 587 to 597 (PTTNGSIIKNE) has biased composition (polar residues).

It is found in the nucleus. Its function is as follows. Binds to platinated DNA and confers sensitivity to the anticancer drug cisplatin. Activate the expression of the COX5B gene. In Saccharomyces cerevisiae (strain ATCC 204508 / S288c) (Baker's yeast), this protein is Intrastrand cross-link recognition protein (IXR1).